The primary structure comprises 453 residues: Ethanolamine ammonia-lyase large subunit (453 aa).

Substrate is bound by residues 160–162 (RLQ) and N193. Residues P194 and Q246 each contribute to the adenosylcob(III)alamin site. Residue E287 coordinates substrate. S295 contacts adenosylcob(III)alamin. Position 362 (D362) interacts with substrate. M401 is a binding site for adenosylcob(III)alamin.

The protein belongs to the EutB family. As to quaternary structure, the basic unit is a heterodimer which dimerizes to form tetramers. The heterotetramers trimerize; 6 large subunits form a core ring with 6 small subunits projecting outwards. Requires adenosylcob(III)alamin as cofactor.

It localises to the bacterial microcompartment. The enzyme catalyses ethanolamine = acetaldehyde + NH4(+). Its pathway is amine and polyamine degradation; ethanolamine degradation. Its function is as follows. Catalyzes the deamination of various vicinal amino-alcohols to oxo compounds. It is spontaneously inactivated by its substrate and reactivated by EutA. May play a role in BMC assembly or maintenance. Expression of the eut operon allows this bacteria to use ethanolamine (EA) as a carbon, nitrogen and energy source. It relies on cobalamin (vitamin B12) both as a cofactor for the ethanolamine ammonia-lyase activity and to induce the operon. EA enhances bacterial survival in macrophages in a concentration-dependent manner, suggesting it is an important nutrient during infection. The chain is Ethanolamine ammonia-lyase large subunit from Salmonella typhimurium (strain LT2 / SGSC1412 / ATCC 700720).